Here is an 800-residue protein sequence, read N- to C-terminus: Serine/threonine-protein kinase KIN4 (800 aa).

The 268-residue stretch at Tyr-46 to Leu-313 folds into the Protein kinase domain. ATP contacts are provided by residues Leu-52 to Val-60 and Lys-80. Asp-175 (proton acceptor) is an active-site residue. Disordered regions lie at residues Leu-331–Val-397 and Ser-438–Thr-487. Low complexity predominate over residues Ser-348–Ser-358. Phosphoserine is present on residues Ser-365 and Ser-388. Composition is skewed to polar residues over residues Gln-380–Ser-395 and Gly-459–Lys-473. Ser-521 carries the post-translational modification Phosphoserine. Disordered stretches follow at residues Glu-629–Ser-661 and Ser-678–Ser-754. A compositionally biased stretch (polar residues) spans Ser-678–Asn-721. Residues Pro-727–Asp-740 show a composition bias toward basic and acidic residues. Ser-748 is subject to Phosphoserine.

This sequence belongs to the protein kinase superfamily. Ser/Thr protein kinase family.

The catalysed reaction is L-seryl-[protein] + ATP = O-phospho-L-seryl-[protein] + ADP + H(+). It carries out the reaction L-threonyl-[protein] + ATP = O-phospho-L-threonyl-[protein] + ADP + H(+). Its function is as follows. This protein is probably a serine/threonine protein kinase. This is Serine/threonine-protein kinase KIN4 (KIN4) from Saccharomyces cerevisiae (strain ATCC 204508 / S288c) (Baker's yeast).